The chain runs to 95 residues: Large ribosomal subunit protein bL25 (95 aa).

The protein belongs to the bacterial ribosomal protein bL25 family. Part of the 50S ribosomal subunit; part of the 5S rRNA/L5/L18/L25 subcomplex. Contacts the 5S rRNA. Binds to the 5S rRNA independently of L5 and L18.

Its function is as follows. This is one of the proteins that binds to the 5S RNA in the ribosome where it forms part of the central protuberance. This is Large ribosomal subunit protein bL25 from Shewanella piezotolerans (strain WP3 / JCM 13877).